The sequence spans 102 residues: Aspartyl/glutamyl-tRNA(Asn/Gln) amidotransferase subunit C (102 aa).

The protein belongs to the GatC family. Heterotrimer of A, B and C subunits.

The catalysed reaction is L-glutamyl-tRNA(Gln) + L-glutamine + ATP + H2O = L-glutaminyl-tRNA(Gln) + L-glutamate + ADP + phosphate + H(+). The enzyme catalyses L-aspartyl-tRNA(Asn) + L-glutamine + ATP + H2O = L-asparaginyl-tRNA(Asn) + L-glutamate + ADP + phosphate + 2 H(+). Functionally, allows the formation of correctly charged Asn-tRNA(Asn) or Gln-tRNA(Gln) through the transamidation of misacylated Asp-tRNA(Asn) or Glu-tRNA(Gln) in organisms which lack either or both of asparaginyl-tRNA or glutaminyl-tRNA synthetases. The reaction takes place in the presence of glutamine and ATP through an activated phospho-Asp-tRNA(Asn) or phospho-Glu-tRNA(Gln). The chain is Aspartyl/glutamyl-tRNA(Asn/Gln) amidotransferase subunit C from Bordetella petrii (strain ATCC BAA-461 / DSM 12804 / CCUG 43448).